The chain runs to 378 residues: Putative glycosyltransferase ORF378 (378 aa).

Belongs to the glycosyltransferase group 1 family. Glycosyltransferase 4 subfamily.

This is Putative glycosyltransferase ORF378 from Acidianus sp. F28 (AFV-2).